We begin with the raw amino-acid sequence, 213 residues long: ATP-dependent dethiobiotin synthetase BioD (213 aa).

12-17 (EVGKTY) is an ATP binding site. Residue Thr16 participates in Mg(2+) binding. Lys37 is an active-site residue. ATP-binding positions include Asp46, 107 to 110 (EGVG), and 167 to 168 (NN). The Mg(2+) site is built by Asp46 and Glu107.

It belongs to the dethiobiotin synthetase family. Homodimer. It depends on Mg(2+) as a cofactor.

It is found in the cytoplasm. The catalysed reaction is (7R,8S)-7,8-diammoniononanoate + CO2 + ATP = (4R,5S)-dethiobiotin + ADP + phosphate + 3 H(+). The protein operates within cofactor biosynthesis; biotin biosynthesis; biotin from 7,8-diaminononanoate: step 1/2. Its function is as follows. Catalyzes a mechanistically unusual reaction, the ATP-dependent insertion of CO2 between the N7 and N8 nitrogen atoms of 7,8-diaminopelargonic acid (DAPA, also called 7,8-diammoniononanoate) to form a ureido ring. This is ATP-dependent dethiobiotin synthetase BioD from Akkermansia muciniphila (strain ATCC BAA-835 / DSM 22959 / JCM 33894 / BCRC 81048 / CCUG 64013 / CIP 107961 / Muc).